Consider the following 466-residue polypeptide: 23S rRNA (uracil(1939)-C(5))-methyltransferase RlmD (466 aa).

The TRAM domain maps to 1-54 (MVDVLNIESLDLEARGIAHRDGKVLFVEGALPGERVTVQTVRRKPSYEIAKVEE). 4 residues coordinate [4Fe-4S] cluster: cysteine 67, cysteine 73, cysteine 76, and cysteine 155. Residues glutamine 264, phenylalanine 293, asparagine 298, glutamate 314, asparagine 342, and aspartate 363 each contribute to the S-adenosyl-L-methionine site. The Nucleophile role is filled by cysteine 393.

This sequence belongs to the class I-like SAM-binding methyltransferase superfamily. RNA M5U methyltransferase family. RlmD subfamily.

The enzyme catalyses uridine(1939) in 23S rRNA + S-adenosyl-L-methionine = 5-methyluridine(1939) in 23S rRNA + S-adenosyl-L-homocysteine + H(+). Catalyzes the formation of 5-methyl-uridine at position 1939 (m5U1939) in 23S rRNA. The protein is 23S rRNA (uracil(1939)-C(5))-methyltransferase RlmD of Bordetella pertussis (strain Tohama I / ATCC BAA-589 / NCTC 13251).